Here is a 152-residue protein sequence, read N- to C-terminus: Transcriptional regulator MraZ (152 aa).

SpoVT-AbrB domains lie at 5–52 (ANAI…PLNE) and 81–124 (ATES…DEDM).

Belongs to the MraZ family. In terms of assembly, forms oligomers.

Its subcellular location is the cytoplasm. The protein resides in the nucleoid. The sequence is that of Transcriptional regulator MraZ from Psychromonas ingrahamii (strain DSM 17664 / CCUG 51855 / 37).